The following is a 145-amino-acid chain: METSDELKQRIGDLSYEVTQHAATESPFTGEYDNFFEKGIYVDIVSGEVLFSSLDKFNSGCGWPAFSKPIENRMVTNHDDSSYGMRRVEVKSREAGSHLGHVFSDGPKEAGGLRYCINSAALKFIPYDQMEKEGYAQWLTLFDET.

The MsrB domain occupies 4-127 (SDELKQRIGD…NSAALKFIPY (124 aa)). Cys116 functions as the Nucleophile in the catalytic mechanism.

This sequence belongs to the MsrB Met sulfoxide reductase family.

It carries out the reaction L-methionyl-[protein] + [thioredoxin]-disulfide + H2O = L-methionyl-(R)-S-oxide-[protein] + [thioredoxin]-dithiol. The chain is Peptide methionine sulfoxide reductase MsrB from Streptococcus pyogenes serotype M1.